We begin with the raw amino-acid sequence, 431 residues long: tRNA-specific 2-thiouridylase MnmA (431 aa).

ATP is bound by residues 35–42 (AMSGGVDS) and Leu61. The Nucleophile role is filled by Cys129. An intrachain disulfide couples Cys129 to Cys226. Position 153 (Gly153) interacts with ATP. Residues 176–178 (RDQ) form an interaction with tRNA region. The Cysteine persulfide intermediate role is filled by Cys226. Residues 407 to 431 (PKPPNEDLLDTNESSDLVSPKRSAC) are disordered.

This sequence belongs to the MnmA/TRMU family.

Its subcellular location is the cytoplasm. The enzyme catalyses S-sulfanyl-L-cysteinyl-[protein] + uridine(34) in tRNA + AH2 + ATP = 2-thiouridine(34) in tRNA + L-cysteinyl-[protein] + A + AMP + diphosphate + H(+). In terms of biological role, catalyzes the 2-thiolation of uridine at the wobble position (U34) of tRNA, leading to the formation of s(2)U34. This is tRNA-specific 2-thiouridylase MnmA from Beijerinckia indica subsp. indica (strain ATCC 9039 / DSM 1715 / NCIMB 8712).